Reading from the N-terminus, the 325-residue chain is Porphobilinogen deaminase (325 aa).

C253 bears the S-(dipyrrolylmethanemethyl)cysteine mark.

This sequence belongs to the HMBS family. The cofactor is dipyrromethane.

It carries out the reaction 4 porphobilinogen + H2O = hydroxymethylbilane + 4 NH4(+). It functions in the pathway porphyrin-containing compound metabolism; protoporphyrin-IX biosynthesis; coproporphyrinogen-III from 5-aminolevulinate: step 2/4. Its function is as follows. Tetrapolymerization of the monopyrrole PBG into the hydroxymethylbilane pre-uroporphyrinogen in several discrete steps. In Dictyostelium discoideum (Social amoeba), this protein is Porphobilinogen deaminase (hemC).